Here is a 218-residue protein sequence, read N- to C-terminus: Protein GrpE (218 aa).

Basic and acidic residues-rich tracts occupy residues 1-13 (MSKN…HQNN) and 20-32 (VDKK…NKQE). Residues 1 to 32 (MSKNNENIKHQNNDKVNNQVDKKETKNHNKQE) are disordered.

This sequence belongs to the GrpE family. In terms of assembly, homodimer.

It is found in the cytoplasm. Participates actively in the response to hyperosmotic and heat shock by preventing the aggregation of stress-denatured proteins, in association with DnaK and GrpE. It is the nucleotide exchange factor for DnaK and may function as a thermosensor. Unfolded proteins bind initially to DnaJ; upon interaction with the DnaJ-bound protein, DnaK hydrolyzes its bound ATP, resulting in the formation of a stable complex. GrpE releases ADP from DnaK; ATP binding to DnaK triggers the release of the substrate protein, thus completing the reaction cycle. Several rounds of ATP-dependent interactions between DnaJ, DnaK and GrpE are required for fully efficient folding. This chain is Protein GrpE, found in Ureaplasma parvum serovar 3 (strain ATCC 27815 / 27 / NCTC 11736).